The sequence spans 769 residues: Trehalose 6-phosphate phosphorylase (769 aa).

Position 342 to 343 (342 to 343 (WD)) interacts with substrate. E480 functions as the Proton donor in the catalytic mechanism. Substrate is bound at residue 589 to 590 (KQ).

Belongs to the glycosyl hydrolase 65 family. As to quaternary structure, monomer.

The catalysed reaction is alpha,alpha-trehalose 6-phosphate + phosphate = beta-D-glucose 1-phosphate + D-glucose 6-phosphate. Catalyzes the conversion of trehalose 6-phosphate into glucose 1-phosphate and glucose 6-phosphate. The sequence is that of Trehalose 6-phosphate phosphorylase (trePP) from Lactococcus lactis subsp. lactis (strain IL1403) (Streptococcus lactis).